Consider the following 448-residue polypeptide: Phosphoglucosamine mutase (448 aa).

The Phosphoserine intermediate role is filled by Ser102. Mg(2+) is bound by residues Ser102, Asp243, Asp245, and Asp247. Ser102 is subject to Phosphoserine.

Belongs to the phosphohexose mutase family. It depends on Mg(2+) as a cofactor. In terms of processing, activated by phosphorylation.

It carries out the reaction alpha-D-glucosamine 1-phosphate = D-glucosamine 6-phosphate. Functionally, catalyzes the conversion of glucosamine-6-phosphate to glucosamine-1-phosphate. The sequence is that of Phosphoglucosamine mutase from Parvibaculum lavamentivorans (strain DS-1 / DSM 13023 / NCIMB 13966).